The primary structure comprises 104 residues: Urease subunit beta (104 aa).

The protein belongs to the urease beta subunit family. Heterotrimer of UreA (gamma), UreB (beta) and UreC (alpha) subunits. Three heterotrimers associate to form the active enzyme.

It localises to the cytoplasm. The enzyme catalyses urea + 2 H2O + H(+) = hydrogencarbonate + 2 NH4(+). The protein operates within nitrogen metabolism; urea degradation; CO(2) and NH(3) from urea (urease route): step 1/1. This is Urease subunit beta from Mycolicibacterium vanbaalenii (strain DSM 7251 / JCM 13017 / BCRC 16820 / KCTC 9966 / NRRL B-24157 / PYR-1) (Mycobacterium vanbaalenii).